Consider the following 211-residue polypeptide: Adenylate kinase (211 aa).

ATP is bound at residue 13 to 18 (GAGKGT). The tract at residues 33–62 (STGDILRVAVANKTKLGLEAKKFMDAGQLV) is NMP. AMP-binding positions include Thr34, Arg39, 60–62 (QLV), 88–91 (GFPR), and Gln95. The tract at residues 129–161 (GRRTSKVTGKIYHIKFNPPVDEKPEDLVQRADD) is LID. Residues Arg130 and 139 to 140 (IY) contribute to the ATP site. Arg158 and Arg169 together coordinate AMP. Residue Lys197 participates in ATP binding.

The protein belongs to the adenylate kinase family. As to quaternary structure, monomer.

Its subcellular location is the cytoplasm. The enzyme catalyses AMP + ATP = 2 ADP. It participates in purine metabolism; AMP biosynthesis via salvage pathway; AMP from ADP: step 1/1. Its function is as follows. Catalyzes the reversible transfer of the terminal phosphate group between ATP and AMP. Plays an important role in cellular energy homeostasis and in adenine nucleotide metabolism. The protein is Adenylate kinase of Fusobacterium nucleatum subsp. nucleatum (strain ATCC 25586 / DSM 15643 / BCRC 10681 / CIP 101130 / JCM 8532 / KCTC 2640 / LMG 13131 / VPI 4355).